Reading from the N-terminus, the 521-residue chain is AAA ATPase forming ring-shaped complexes (521 aa).

A coiled-coil region spans residues 4–44 (TEDLAALNDRLMAKNHALAEALNRAGKELTKAKSRLAQLAQ). 235–240 (GNGKTM) is a binding site for ATP.

The protein belongs to the AAA ATPase family. Homohexamer. Assembles into a hexameric ring structure.

This Bifidobacterium longum subsp. infantis (strain ATCC 15697 / DSM 20088 / JCM 1222 / NCTC 11817 / S12) protein is AAA ATPase forming ring-shaped complexes.